Reading from the N-terminus, the 429-residue chain is Stromal membrane-associated protein 2 (429 aa).

The 125-residue stretch at 13-137 (QAVLANLLLE…LDINAFRKEK (125 aa)) folds into the Arf-GAP domain. Residues 28–51 (CADCQSKGPRWASWNIGVFICIRC) form a C4-type zinc finger. Residue serine 127 is modified to Phosphoserine. Residues 138-172 (DNKWKRGSEPAPEKKMEPVVFEKVKMPQKKEDPQL) show a composition bias toward basic and acidic residues. Disordered stretches follow at residues 138–181 (DNKW…PKSK) and 217–263 (VSSP…KKQL). An interaction with clathrin heavy chains region spans residues 163 to 232 (MPQKKEDPQL…SVSRKVVGSM (70 aa)). Over residues 217–231 (VSSPSSSVSRKVVGS) the composition is skewed to low complexity. Phosphoserine occurs at positions 219, 223, 225, 231, and 240. A compositionally biased stretch (basic and acidic residues) spans 253-263 (SKSEETSKKQL). The tract at residues 340–429 (MGGMQASMMG…NQTLSPQMWK (90 aa)) is interaction with PICALM.

Interacts with ARF1. Interacts with PICALM and clathrin heavy chains.

Its subcellular location is the cytoplasm. Its function is as follows. GTPase activating protein that acts on ARF1. Can also activate ARF6 (in vitro). May play a role in clathrin-dependent retrograde transport from early endosomes to the trans-Golgi network. The polypeptide is Stromal membrane-associated protein 2 (SMAP2) (Bos taurus (Bovine)).